The following is a 110-amino-acid chain: ATP synthase epsilon chain (110 aa).

It belongs to the ATPase epsilon chain family. F-type ATPases have 2 components, CF(1) - the catalytic core - and CF(0) - the membrane proton channel. CF(1) has five subunits: alpha(3), beta(3), gamma(1), delta(1), epsilon(1). CF(0) has three main subunits: a, b and c.

The protein localises to the cell inner membrane. Produces ATP from ADP in the presence of a proton gradient across the membrane. In Rickettsia typhi (strain ATCC VR-144 / Wilmington), this protein is ATP synthase epsilon chain.